Here is a 199-residue protein sequence, read N- to C-terminus: Recombination protein RecR (199 aa).

Residues 58–73 (CKKCFNFTSEDECEIC) form a C4-type zinc finger. One can recognise a Toprim domain in the interval 81–175 (KLICVVAETK…KVTRIAYGLP (95 aa)).

This sequence belongs to the RecR family.

In terms of biological role, may play a role in DNA repair. It seems to be involved in an RecBC-independent recombinational process of DNA repair. It may act with RecF and RecO. In Prochlorococcus marinus (strain MIT 9312), this protein is Recombination protein RecR.